The following is a 250-amino-acid chain: MENPNHCPLEDIQVNPWKTPQSKARVITLRIDDPNEINNLLSINEIENTNYLLQAIMLANAFQKALVPTSTEFAEDALQFSMTKGLEVANTISPPGAVVQYVDQNVSQTNNQVSAMINKVLDVLKSILGVALGQSVIEQLTSAVTNTFTNLNTQKNEAWIFWGRETSTQTNYTYNVLFAIQNGQTGGVMYCVPVGFEIKVSAVKERVLFLTIQDSASYNVNIQSLKFAQPLVSASEYPIADLTSAINGTL.

It belongs to the cyt1/cyt2 endotoxin family. Active after proteolytic processing.

Its function is as follows. Kills the larvae of dipteran insects by making pores in the epithelial cell membrane of the insect midgut. This Bacillus thuringiensis subsp. medellin protein is Type-1Ab cytolytic delta-endotoxin (cyt1Ab1).